The primary structure comprises 106 residues: Large ribosomal subunit protein eL42 (106 aa).

This sequence belongs to the eukaryotic ribosomal protein eL42 family. As to quaternary structure, component of the large ribosomal subunit.

Its subcellular location is the cytoplasm. In terms of biological role, component of the large ribosomal subunit. The ribosome is a large ribonucleoprotein complex responsible for the synthesis of proteins in the cell. The sequence is that of Large ribosomal subunit protein eL42 (RPL36A) from Papio anubis (Olive baboon).